Reading from the N-terminus, the 365-residue chain is tRNA/tmRNA (uracil-C(5))-methyltransferase (365 aa).

Residues Q189, Y217, N222, E238, and D298 each contribute to the S-adenosyl-L-methionine site. The Nucleophile role is filled by C323. The active-site Proton acceptor is E357.

This sequence belongs to the class I-like SAM-binding methyltransferase superfamily. RNA M5U methyltransferase family. TrmA subfamily.

It catalyses the reaction uridine(54) in tRNA + S-adenosyl-L-methionine = 5-methyluridine(54) in tRNA + S-adenosyl-L-homocysteine + H(+). The enzyme catalyses uridine(341) in tmRNA + S-adenosyl-L-methionine = 5-methyluridine(341) in tmRNA + S-adenosyl-L-homocysteine + H(+). Functionally, dual-specificity methyltransferase that catalyzes the formation of 5-methyluridine at position 54 (m5U54) in all tRNAs, and that of position 341 (m5U341) in tmRNA (transfer-mRNA). This chain is tRNA/tmRNA (uracil-C(5))-methyltransferase, found in Pseudoalteromonas atlantica (strain T6c / ATCC BAA-1087).